Reading from the N-terminus, the 380-residue chain is Transcription factor RF2a (380 aa).

The disordered stretch occupies residues 1-57 (MNREKSPIPGDGGDGLPPQATRRAGPPAAAAAAEYDISRMPDFPTRNPGHRRAHSEI). Over residues 16 to 33 (LPPQATRRAGPPAAAAAA) the composition is skewed to low complexity. Residues 56 to 108 (EILSLPEDLDLCAAGGGDGPSLSDENDEELFSMFLDVEKLNSTCGASSEAEAE) form an activation of RTBV promoter region. Residues 181–244 (DPKRAKRIWA…SGLTTENSEL (64 aa)) enclose the bZIP domain. A basic motif region spans residues 183 to 204 (KRAKRIWANRQSAARSKERKMR). The interval 209-244 (LERKVQTLQTEATTLSAQLALLQRDTSGLTTENSEL) is leucine-zipper. The interaction with TBP2 stretch occupies residues 283 to 357 (GGMMMNFGGM…AQQLQQAARD (75 aa)). The segment covering 326–355 (QAQQQQVLHPQHQQQQPLHPLQAQQLQQAA) has biased composition (low complexity). A disordered region spans residues 326 to 380 (QAQQQQVLHPQHQQQQPLHPLQAQQLQQAARDLKMKSPMGGQSQWGDGKSGSSGN).

Belongs to the bZIP family. As to quaternary structure, binds DNA as a homodimer or as a heterodimer with RF2b. The heterodimer binds stronger to DNA than the homodimer. Interacts with TBP2. Expressed at high levels in levels in leaf sheath, moderate levels in leaf blade, but not in roots. Predominantly expressed in vascular tissues.

It localises to the nucleus. Transcription factor probably involved in vascular development and shoot tissue organization. Binds to the DNA sequence 5'-CCGAGTGTGCCCCTGG-3' present in the promoter region Box II of the phloem-specific rice tungro bacilliform virus (RTBV) promoter. May regulate tissue-specific expression of the RTBV promoter and virus replication. The protein is Transcription factor RF2a (RF2a) of Oryza sativa subsp. japonica (Rice).